The primary structure comprises 239 residues: MILLLDAGNTRLKWAWLAEGPARHTVHASPHHDLTALEQACRITPPRRVLGASVTSSERNSAIMAAVGRPVEWLVPAASCAGVTNAYRDPDRLGADRWAQMIGAHHEQPGDQVLVSAGTALTIDCLDREGRFWGGTIAPGLGLLRHSLAEGTARLGLPDGSWQEYPDNSADAIFSGCLNALTAPIEAQVARFGSQLGRPVRLTLAGGDAPLLAQHLAIDGTIVDNLVLSGLAHLARMSC.

Aspartate 6–lysine 13 contributes to the ATP binding site. Substrate is bound by residues tyrosine 87 and glycine 94–arginine 97. The active-site Proton acceptor is aspartate 96. ATP is bound at residue threonine 119. Substrate is bound at residue serine 169.

Belongs to the type III pantothenate kinase family. As to quaternary structure, homodimer. Requires NH4(+) as cofactor. It depends on K(+) as a cofactor.

Its subcellular location is the cytoplasm. It carries out the reaction (R)-pantothenate + ATP = (R)-4'-phosphopantothenate + ADP + H(+). The protein operates within cofactor biosynthesis; coenzyme A biosynthesis; CoA from (R)-pantothenate: step 1/5. Catalyzes the phosphorylation of pantothenate (Pan), the first step in CoA biosynthesis. The sequence is that of Type III pantothenate kinase from Laribacter hongkongensis (strain HLHK9).